The chain runs to 425 residues: Elongation factor 1-alpha (425 aa).

The region spanning 5 to 221 is the tr-type G domain; it reads KPHMNLAVIG…NALSEPEKPT (217 aa). Positions 14 to 21 are G1; that stretch reads GHIDHGKS. 14–21 serves as a coordination point for GTP; that stretch reads GHIDHGKS. Ser-21 is a Mg(2+) binding site. Residues 70-74 form a G2 region; that stretch reads GITID. The segment at 91–94 is G3; the sequence is DCPG. GTP-binding positions include 91–95 and 146–149; these read DCPGH and NKMD. The segment at 146–149 is G4; that stretch reads NKMD. A G5 region spans residues 185–187; it reads SAF.

It belongs to the TRAFAC class translation factor GTPase superfamily. Classic translation factor GTPase family. EF-Tu/EF-1A subfamily.

The protein localises to the cytoplasm. It carries out the reaction GTP + H2O = GDP + phosphate + H(+). GTP hydrolase that promotes the GTP-dependent binding of aminoacyl-tRNA to the A-site of ribosomes during protein biosynthesis. This chain is Elongation factor 1-alpha, found in Methanoculleus marisnigri (strain ATCC 35101 / DSM 1498 / JR1).